The following is a 446-amino-acid chain: Asparagine--tRNA ligase (446 aa).

The protein belongs to the class-II aminoacyl-tRNA synthetase family. In terms of assembly, homodimer.

The protein resides in the cytoplasm. It carries out the reaction tRNA(Asn) + L-asparagine + ATP = L-asparaginyl-tRNA(Asn) + AMP + diphosphate + H(+). This chain is Asparagine--tRNA ligase, found in Sorangium cellulosum (strain So ce56) (Polyangium cellulosum (strain So ce56)).